Consider the following 572-residue polypeptide: Cytosolic Fe-S cluster assembly factor NAR1 (572 aa).

[4Fe-4S] cluster is bound by residues Cys-20, Cys-62, Cys-65, Cys-68, Cys-205, and Cys-260. Positions 416 to 436 (ARPSRMPGGKPIGSARRPNGK) are disordered. The [4Fe-4S] cluster site is built by Cys-450 and Cys-454.

This sequence belongs to the NARF family.

Component of the cytosolic Fe/S protein assembly machinery. Required for maturation of extramitochondrial Fe/S proteins. May play a role in the transfer of pre-assembled Fe/S clusters to target apoproteins. This Botryotinia fuckeliana (strain B05.10) (Noble rot fungus) protein is Cytosolic Fe-S cluster assembly factor NAR1 (NAR1).